Here is a 281-residue protein sequence, read N- to C-terminus: 2-dehydro-3-deoxyphosphooctonate aldolase (281 aa).

This sequence belongs to the KdsA family.

It is found in the cytoplasm. It catalyses the reaction D-arabinose 5-phosphate + phosphoenolpyruvate + H2O = 3-deoxy-alpha-D-manno-2-octulosonate-8-phosphate + phosphate. It functions in the pathway carbohydrate biosynthesis; 3-deoxy-D-manno-octulosonate biosynthesis; 3-deoxy-D-manno-octulosonate from D-ribulose 5-phosphate: step 2/3. It participates in bacterial outer membrane biogenesis; lipopolysaccharide biosynthesis. This is 2-dehydro-3-deoxyphosphooctonate aldolase from Pseudomonas putida (strain GB-1).